A 416-amino-acid chain; its full sequence is Probable sarcosine oxidase (416 aa).

10 to 40 provides a ligand contact to FAD; it reads DVIVVGAGVMGSSAAYQLAKRGQKTLLLEQF. Cys-325 carries the S-8alpha-FAD cysteine modification.

The protein belongs to the MSOX/MTOX family. FAD is required as a cofactor.

The enzyme catalyses sarcosine + O2 + H2O = formaldehyde + glycine + H2O2. The sequence is that of Probable sarcosine oxidase from Arabidopsis thaliana (Mouse-ear cress).